The chain runs to 148 residues: SsrA-binding protein (148 aa).

The protein belongs to the SmpB family.

It localises to the cytoplasm. Its function is as follows. Required for rescue of stalled ribosomes mediated by trans-translation. Binds to transfer-messenger RNA (tmRNA), required for stable association of tmRNA with ribosomes. tmRNA and SmpB together mimic tRNA shape, replacing the anticodon stem-loop with SmpB. tmRNA is encoded by the ssrA gene; the 2 termini fold to resemble tRNA(Ala) and it encodes a 'tag peptide', a short internal open reading frame. During trans-translation Ala-aminoacylated tmRNA acts like a tRNA, entering the A-site of stalled ribosomes, displacing the stalled mRNA. The ribosome then switches to translate the ORF on the tmRNA; the nascent peptide is terminated with the 'tag peptide' encoded by the tmRNA and targeted for degradation. The ribosome is freed to recommence translation, which seems to be the essential function of trans-translation. In Azoarcus sp. (strain BH72), this protein is SsrA-binding protein.